The primary structure comprises 380 residues: Chaperone protein DnaJ (380 aa).

The J domain maps to 5-70 (DYYEVLGVSK…QKRQTYDQYG (66 aa)). The segment at 136 to 214 (GKEVEIKIPT…CHGQGRVEKT (79 aa)) adopts a CR-type zinc-finger fold. Residues C149, C152, C166, C169, C188, C191, C202, and C205 each coordinate Zn(2+). CXXCXGXG motif repeat units lie at residues 149-156 (CDPCDGSG), 166-173 (CTTCHGAG), 188-195 (CPTCQGQG), and 202-209 (CDSCHGQG).

Belongs to the DnaJ family. In terms of assembly, homodimer. Zn(2+) is required as a cofactor.

Its subcellular location is the cytoplasm. Participates actively in the response to hyperosmotic and heat shock by preventing the aggregation of stress-denatured proteins and by disaggregating proteins, also in an autonomous, DnaK-independent fashion. Unfolded proteins bind initially to DnaJ; upon interaction with the DnaJ-bound protein, DnaK hydrolyzes its bound ATP, resulting in the formation of a stable complex. GrpE releases ADP from DnaK; ATP binding to DnaK triggers the release of the substrate protein, thus completing the reaction cycle. Several rounds of ATP-dependent interactions between DnaJ, DnaK and GrpE are required for fully efficient folding. Also involved, together with DnaK and GrpE, in the DNA replication of plasmids through activation of initiation proteins. This is Chaperone protein DnaJ from Pseudoalteromonas translucida (strain TAC 125).